A 366-amino-acid chain; its full sequence is Alcohol dehydrogenase (366 aa).

Zn(2+) is bound by residues Cys-41, His-62, Glu-63, and Asp-167.

This sequence belongs to the zinc-containing alcohol dehydrogenase family. Homotetramer. It depends on Zn(2+) as a cofactor.

It carries out the reaction a primary alcohol + NAD(+) = an aldehyde + NADH + H(+). It catalyses the reaction a secondary alcohol + NAD(+) = a ketone + NADH + H(+). The catalysed reaction is (R,R)-butane-2,3-diol + NAD(+) = (R)-acetoin + NADH + H(+). The enzyme catalyses an aldehyde + NAD(+) + H2O = a carboxylate + NADH + 2 H(+). Multifunctional alcohol dehydrogenase exhibiting NAD(+)-dependent dehydrogenase activities for 2,3-butanediol, ethanol and acetaldehyde, and reductase activities for acetoin (NADH-dependent), and diacetyl and acetaldehyde (independently of whether NADH or NADPH is the reductant). The rate of oxidation of 2,3-butanediol is much higher than for the oxidation of ethanol. Has acetaldehyde dehydrogenase activity leading to acetate formation. May function in the release of excess reducing power in the absence of exogenous hydrogen acceptors such as oxygen. The chain is Alcohol dehydrogenase (adh) from Cupriavidus necator (Alcaligenes eutrophus).